The chain runs to 211 residues: Thymidylate kinase (211 aa).

10–17 contacts ATP; sequence GPDGAGKT.

The protein belongs to the thymidylate kinase family.

The catalysed reaction is dTMP + ATP = dTDP + ADP. Phosphorylation of dTMP to form dTDP in both de novo and salvage pathways of dTTP synthesis. The protein is Thymidylate kinase of Lactococcus lactis subsp. cremoris (strain SK11).